The following is a 446-amino-acid chain: Chromosomal replication initiator protein DnaA (446 aa).

The segment at 1-92 is domain I, interacts with DnaA modulators; that stretch reads MENISDLWNS…SQAEEEIDLP (92 aa). Positions 87-107 are disordered; it reads EEIDLPPSKPNSAQDDSNHLP. Residues 93 to 109 are domain II; that stretch reads PSKPNSAQDDSNHLPQS. Positions 96–107 are enriched in polar residues; sequence PNSAQDDSNHLP. The tract at residues 110–326 is domain III, AAA+ region; the sequence is MLNPKYTFDT…GALIRVVAYS (217 aa). ATP contacts are provided by Gly-154, Gly-156, Lys-157, and Thr-158. Residues 327-446 form a domain IV, binds dsDNA region; sequence SLINKDINAD…QVEEINDILK (120 aa).

It belongs to the DnaA family. As to quaternary structure, oligomerizes as a right-handed, spiral filament on DNA at oriC.

It is found in the cytoplasm. Plays an essential role in the initiation and regulation of chromosomal replication. ATP-DnaA binds to the origin of replication (oriC) to initiate formation of the DNA replication initiation complex once per cell cycle. Binds the DnaA box (a 9 base pair repeat at the origin) and separates the double-stranded (ds)DNA. Forms a right-handed helical filament on oriC DNA; dsDNA binds to the exterior of the filament while single-stranded (ss)DNA is stabiized in the filament's interior. The ATP-DnaA-oriC complex binds and stabilizes one strand of the AT-rich DNA unwinding element (DUE), permitting loading of DNA polymerase. After initiation quickly degrades to an ADP-DnaA complex that is not apt for DNA replication. Binds acidic phospholipids. This is Chromosomal replication initiator protein DnaA from Bacillus cereus (strain ATCC 10987 / NRS 248).